A 296-amino-acid chain; its full sequence is Gamma-D-glutamyl-L-lysine dipeptidyl-peptidase (296 aa).

Substrate-binding positions include Tyr-90, 199 to 201 (DCS), and 218 to 219 (DA). Residues 170-295 (KGTAEDIIQT…ELCAVRRCFS (126 aa)) enclose the NlpC/P60 domain. Cys-200 serves as the catalytic Nucleophile. His-253 acts as the Proton acceptor in catalysis. Residue His-265 is part of the active site.

Belongs to the peptidase C40 family.

The catalysed reaction is The enzyme releases L-Ala-gamma-D-Glu dipeptides from cell wall peptides via cleavage of an L-Ala-gamma-D-Glu-|-L-Lys bond.. It functions in the pathway cell wall degradation; peptidoglycan degradation. Functionally, specifically hydrolyzes gamma-D-glutamyl-L-lysine bonds in murein peptides, releasing L-Ala-D-Glu. The polypeptide is Gamma-D-glutamyl-L-lysine dipeptidyl-peptidase (ykfC) (Bacillus subtilis (strain 168)).